The following is a 27-amino-acid chain: uncharacterized protein (27 aa).

The protein resides in the plastid. It localises to the chloroplast. This is an uncharacterized protein from Trieres chinensis (Marine centric diatom).